Here is a 176-residue protein sequence, read N- to C-terminus: 2-C-methyl-D-erythritol 2,4-cyclodiphosphate synthase (176 aa).

Residues Asp23, His25, and His60 each coordinate a divalent metal cation. Residue 23–25 (DSH) participates in 4-CDP-2-C-methyl-D-erythritol 2-phosphate binding. 149 to 152 (TSGE) is a binding site for 4-CDP-2-C-methyl-D-erythritol 2-phosphate.

Belongs to the IspF family. In terms of assembly, homotrimer. Requires a divalent metal cation as cofactor.

It carries out the reaction 4-CDP-2-C-methyl-D-erythritol 2-phosphate = 2-C-methyl-D-erythritol 2,4-cyclic diphosphate + CMP. Its pathway is isoprenoid biosynthesis; isopentenyl diphosphate biosynthesis via DXP pathway; isopentenyl diphosphate from 1-deoxy-D-xylulose 5-phosphate: step 4/6. Functionally, involved in the biosynthesis of isopentenyl diphosphate (IPP) and dimethylallyl diphosphate (DMAPP), two major building blocks of isoprenoid compounds. Catalyzes the conversion of 4-diphosphocytidyl-2-C-methyl-D-erythritol 2-phosphate (CDP-ME2P) to 2-C-methyl-D-erythritol 2,4-cyclodiphosphate (ME-CPP) with a corresponding release of cytidine 5-monophosphate (CMP). The sequence is that of 2-C-methyl-D-erythritol 2,4-cyclodiphosphate synthase from Chlamydia caviae (strain ATCC VR-813 / DSM 19441 / 03DC25 / GPIC) (Chlamydophila caviae).